The primary structure comprises 88 residues: ATP synthase subunit c 1 (88 aa).

2 helical membrane-spanning segments follow: residues Phe-4–Ile-24 and Ile-53–Leu-73.

It belongs to the ATPase C chain family. F-type ATPases have 2 components, F(1) - the catalytic core - and F(0) - the membrane proton channel. F(1) has five subunits: alpha(3), beta(3), gamma(1), delta(1), epsilon(1). F(0) has three main subunits: a(1), b(2) and c(10-14). The alpha and beta chains form an alternating ring which encloses part of the gamma chain. F(1) is attached to F(0) by a central stalk formed by the gamma and epsilon chains, while a peripheral stalk is formed by the delta and b chains.

Its subcellular location is the cell inner membrane. F(1)F(0) ATP synthase produces ATP from ADP in the presence of a proton or sodium gradient. F-type ATPases consist of two structural domains, F(1) containing the extramembraneous catalytic core and F(0) containing the membrane proton channel, linked together by a central stalk and a peripheral stalk. During catalysis, ATP synthesis in the catalytic domain of F(1) is coupled via a rotary mechanism of the central stalk subunits to proton translocation. In terms of biological role, key component of the F(0) channel; it plays a direct role in translocation across the membrane. A homomeric c-ring of between 10-14 subunits forms the central stalk rotor element with the F(1) delta and epsilon subunits. The chain is ATP synthase subunit c 1 from Syntrophotalea carbinolica (strain DSM 2380 / NBRC 103641 / GraBd1) (Pelobacter carbinolicus).